The sequence spans 186 residues: Ribosome maturation factor RimM (186 aa).

The PRC barrel domain occupies 93–166 (PDEYYDHQLM…RAVIDPPPGL (74 aa)). Positions 160-186 (IDPPPGLIDDRAEVDSSDTEAATEADA) are disordered. Residues 174–186 (DSSDTEAATEADA) are compositionally biased toward acidic residues.

It belongs to the RimM family. As to quaternary structure, binds ribosomal protein uS19.

The protein resides in the cytoplasm. An accessory protein needed during the final step in the assembly of 30S ribosomal subunit, possibly for assembly of the head region. Essential for efficient processing of 16S rRNA. May be needed both before and after RbfA during the maturation of 16S rRNA. It has affinity for free ribosomal 30S subunits but not for 70S ribosomes. The protein is Ribosome maturation factor RimM of Streptomyces avermitilis (strain ATCC 31267 / DSM 46492 / JCM 5070 / NBRC 14893 / NCIMB 12804 / NRRL 8165 / MA-4680).